Consider the following 243-residue polypeptide: Pyridoxine 5'-phosphate synthase (243 aa).

Residue asparagine 9 participates in 3-amino-2-oxopropyl phosphate binding. A 1-deoxy-D-xylulose 5-phosphate-binding site is contributed by 11 to 12; the sequence is DH. Arginine 20 serves as a coordination point for 3-amino-2-oxopropyl phosphate. Catalysis depends on histidine 45, which acts as the Proton acceptor. Residues arginine 47 and histidine 52 each coordinate 1-deoxy-D-xylulose 5-phosphate. The active-site Proton acceptor is glutamate 72. Threonine 102 contributes to the 1-deoxy-D-xylulose 5-phosphate binding site. Histidine 193 serves as the catalytic Proton donor. Residues glycine 194 and 215 to 216 each bind 3-amino-2-oxopropyl phosphate; that span reads GH.

This sequence belongs to the PNP synthase family. As to quaternary structure, homooctamer; tetramer of dimers.

The protein resides in the cytoplasm. It catalyses the reaction 3-amino-2-oxopropyl phosphate + 1-deoxy-D-xylulose 5-phosphate = pyridoxine 5'-phosphate + phosphate + 2 H2O + H(+). The protein operates within cofactor biosynthesis; pyridoxine 5'-phosphate biosynthesis; pyridoxine 5'-phosphate from D-erythrose 4-phosphate: step 5/5. Catalyzes the complicated ring closure reaction between the two acyclic compounds 1-deoxy-D-xylulose-5-phosphate (DXP) and 3-amino-2-oxopropyl phosphate (1-amino-acetone-3-phosphate or AAP) to form pyridoxine 5'-phosphate (PNP) and inorganic phosphate. This Vibrio vulnificus (strain CMCP6) protein is Pyridoxine 5'-phosphate synthase.